Consider the following 502-residue polypeptide: ATP synthase subunit alpha (502 aa).

169 to 176 (GDRQTGKT) provides a ligand contact to ATP.

Belongs to the ATPase alpha/beta chains family. F-type ATPases have 2 components, CF(1) - the catalytic core - and CF(0) - the membrane proton channel. CF(1) has five subunits: alpha(3), beta(3), gamma(1), delta(1), epsilon(1). CF(0) has three main subunits: a(1), b(2) and c(9-12). The alpha and beta chains form an alternating ring which encloses part of the gamma chain. CF(1) is attached to CF(0) by a central stalk formed by the gamma and epsilon chains, while a peripheral stalk is formed by the delta and b chains. The F(1)F(0) complex interacts with SpoIIIJ and YqjG; YqgA is found in the same complex.

It localises to the cell membrane. The protein resides in the membrane raft. The catalysed reaction is ATP + H2O + 4 H(+)(in) = ADP + phosphate + 5 H(+)(out). In terms of biological role, produces ATP from ADP in the presence of a proton gradient across the membrane. The alpha chain is a regulatory subunit. The chain is ATP synthase subunit alpha from Bacillus subtilis (strain 168).